A 256-amino-acid polypeptide reads, in one-letter code: Endonuclease NucS (256 aa).

Residues Ala-62–Lys-97 form a disordered region.

This sequence belongs to the NucS endonuclease family.

It is found in the cytoplasm. Cleaves both 3' and 5' ssDNA extremities of branched DNA structures. In Bifidobacterium longum (strain NCC 2705), this protein is Endonuclease NucS.